Reading from the N-terminus, the 496-residue chain is Glutamyl-tRNA(Gln) amidotransferase subunit A, mitochondrial (496 aa).

Residues K80 and S161 each act as charge relay system in the active site. The Acyl-ester intermediate role is filled by S185.

Belongs to the amidase family. GatA subfamily. Subunit of the heterotrimeric GatCAB amidotransferase (AdT) complex, composed of A, B and C subunits.

Its subcellular location is the mitochondrion. The catalysed reaction is L-glutamyl-tRNA(Gln) + L-glutamine + ATP + H2O = L-glutaminyl-tRNA(Gln) + L-glutamate + ADP + phosphate + H(+). Its function is as follows. Allows the formation of correctly charged Gln-tRNA(Gln) through the transamidation of misacylated Glu-tRNA(Gln) in the mitochondria. The reaction takes place in the presence of glutamine and ATP through an activated gamma-phospho-Glu-tRNA(Gln). The polypeptide is Glutamyl-tRNA(Gln) amidotransferase subunit A, mitochondrial (Culex quinquefasciatus (Southern house mosquito)).